Here is a 95-residue protein sequence, read N- to C-terminus: UPF0235 protein Pcar_0617 (95 aa).

The protein belongs to the UPF0235 family.

The sequence is that of UPF0235 protein Pcar_0617 from Syntrophotalea carbinolica (strain DSM 2380 / NBRC 103641 / GraBd1) (Pelobacter carbinolicus).